Reading from the N-terminus, the 714-residue chain is Phenylalanine 2-monooxygenase precursor (714 aa).

Positions 1–15 (MGVTVIPRLLGLKDE) are cleaved as a propeptide — removed in mature form; occupies the channel of the substrate amino acid from the outside of the protein to the interior flavin ring in the precursor. Residues glycine 2, glycine 68, and 95 to 96 (EA) each bind FAD. The propeptide at 108–109 (IK) is linker peptide. Residues arginine 120, 141–144 (GAMR), and valine 375 each bind FAD. A substrate-binding site is contributed by arginine 144. Tyrosine 537 serves as a coordination point for substrate. Residues 652 to 653 (SD) and 660 to 662 (GWL) contribute to the FAD site. Residue glycine 660 participates in substrate binding.

It belongs to the phenylalanine 2-monooxygenase family. As to quaternary structure, heterotetramer composed of 2 alpha and 2 beta subunits. Requires FAD as cofactor. Proteolytically cleaved to yield the active enzyme. Cleavage of the linkage between the 2 subunits causes reshaping of the oxygen channel and the hydrophobic environment around the flavin ring. Removal of the prosequence causes opening of the amino acid channel.

It catalyses the reaction L-phenylalanine + O2 = 2-phenylacetamide + CO2 + H2O. Functionally, catalyzes both oxygenative decarboxylation and oxidative deamination, depending on the substrate used. Has high activity for L-Phe and L-Tyr, but relatively low activities for L-Met and L-Trp. L-Phe is mainly oxygenated and L-Met is mainly oxidized. The sequence is that of Phenylalanine 2-monooxygenase precursor from Pseudomonas sp.